The following is a 247-amino-acid chain: Uridylate kinase (247 aa).

Position 18 to 21 (18 to 21 (KLSG)) interacts with ATP. Gly60 contacts UMP. Residues Gly61 and Arg65 each contribute to the ATP site. Residues Asp80 and 141-148 (TGNPFFTT) each bind UMP. 3 residues coordinate ATP: Thr168, Tyr174, and Asp177.

This sequence belongs to the UMP kinase family. As to quaternary structure, homohexamer.

Its subcellular location is the cytoplasm. It carries out the reaction UMP + ATP = UDP + ADP. The protein operates within pyrimidine metabolism; CTP biosynthesis via de novo pathway; UDP from UMP (UMPK route): step 1/1. Its activity is regulated as follows. Inhibited by UTP. In terms of biological role, catalyzes the reversible phosphorylation of UMP to UDP. The protein is Uridylate kinase of Pseudomonas savastanoi pv. phaseolicola (strain 1448A / Race 6) (Pseudomonas syringae pv. phaseolicola (strain 1448A / Race 6)).